The chain runs to 521 residues: Interleukin-9 receptor (521 aa).

The signal sequence occupies residues 1-40; the sequence is MGLGRCIWEGWTLESEALRRDMGTWLLACICICTCVCLGV. Topologically, residues 41–270 are extracellular; that stretch reads SVTGEGQGPR…GPLIPPWGWP (230 aa). Asn117 and Asn156 each carry an N-linked (GlcNAc...) asparagine glycan. A Fibronectin type-III domain is found at 149–259; the sequence is PPSDLQSNIS…QPVCFQAPQR (111 aa). A WSXWS motif motif is present at residues 245-249; sequence WSEWS. Residues 271-291 traverse the membrane as a helical segment; the sequence is GNTLVAVSIFLLLTGPTYLLF. Residues 292 to 521 are Cytoplasmic-facing; sequence KLSPRVKRIF…VLSKARSWTF (230 aa). The short motif at 301–309 is the Box 1 motif element; sequence FYQNVPSPA. Residues 413-439 are disordered; the sequence is WAPTSLTRPAPPDSEGSRSSSSSSSSN. Over residues 429-439 the composition is skewed to low complexity; that stretch reads SRSSSSSSSSN.

It belongs to the type I cytokine receptor family. Type 4 subfamily. As to quaternary structure, interacts with IL9.

It is found in the cell membrane. Its subcellular location is the secreted. Plays an important role in the immune response against parasites by acting as a receptor of IL9. The chain is Interleukin-9 receptor (IL9R) from Homo sapiens (Human).